The primary structure comprises 858 residues: Neurofilament medium polypeptide (858 aa).

At Ser-2 the chain carries N-acetylserine. Positions 2 to 99 are head; the sequence is SYTMEPLGNP…KLSRSNEKEQ (98 aa). Positions 22–57 are disordered; it reads ATYSRASASPSSGFRSQSWSRGSGSTVSSSYKRTNL. Over residues 30 to 54 the composition is skewed to low complexity; that stretch reads SPSSGFRSQSWSRGSGSTVSSSYKR. Thr-47 is a glycosylation site (O-linked (GlcNAc) threonine). One can recognise an IF rod domain in the interval 96–407; the sequence is EKEQLQGLND…KLLEGEETRF (312 aa). The coil 1A stretch occupies residues 100–131; sequence LQGLNDRFAGYIEKVHYLEQQNKEIEAELAAL. Residues 132–144 are linker 1; that stretch reads RQKHAGRAQLGDA. Residues 145–243 are coil 1B; it reads YEQELRELRG…EEEVAELLAQ (99 aa). The linker 12 stretch occupies residues 244-260; the sequence is LQASHATVERKDYLKTD. The segment at 261–282 is coil 2A; it reads LTTALKEIRAQLECQSDHNMHQ. The linker 2 stretch occupies residues 283–286; sequence AEEW. Positions 287-407 are coil 2B; the sequence is FKCRYAKLTE…KLLEGEETRF (121 aa). The interval 408–858 is tail; that stretch reads SAFSGSITGP…SHAVVKEIKE (451 aa). Thr-427 carries an O-linked (GlcNAc) threonine glycan. A disordered region spans residues 478-788; sequence AAKAQEEEQE…VVTNGLDVSP (311 aa). Acidic residues-rich tracts occupy residues 484-500 and 509-524; these read EEQE…EEEA and AAEE…EEEE. Positions 525-541 are enriched in basic and acidic residues; the sequence is AAKSDAAEEGGSKKEEI. Positions 542-555 are enriched in acidic residues; sequence EEKEEGEEAEEEEA. A compositionally biased stretch (basic and acidic residues) spans 556 to 572; the sequence is EAKGKAEEAGAKVEKVK. Residues 576 to 586 are compositionally biased toward pro residues; it reads AKSPPKSPPKS. Over residues 590-601 the composition is skewed to low complexity; the sequence is EQAKAVQKAAAE. Over residues 602 to 623 the composition is skewed to basic and acidic residues; it reads VGKDQKAEKAAEKAAKEEKAAS. Positions 624–637 are enriched in low complexity; that stretch reads PEKPATPKVTSPEK. Basic and acidic residues-rich tracts occupy residues 651–664 and 675–727; these read ITPE…KPTT and ASPE…KAVV. The span at 728 to 743 shows a compositional bias: low complexity; the sequence is EESITVTKVTKVTAEV. A compositionally biased stretch (basic and acidic residues) spans 744–771; that stretch reads EVSKEARKEDIAVNGEVEEKKDEAKEKE.

It belongs to the intermediate filament family. Post-translationally, there are a number of repeats of the tripeptide K-S-P, NFM is phosphorylated on a number of the serines in this motif. It is thought that phosphorylation of NFM results in the formation of interfilament cross bridges that are important in the maintenance of axonal caliber. Phosphorylation seems to play a major role in the functioning of the larger neurofilament polypeptides (NF-M and NF-H), the levels of phosphorylation being altered developmentally and coincident with a change in the neurofilament function.

It is found in the cytoplasm. The protein localises to the cytoskeleton. The protein resides in the cell projection. It localises to the axon. In terms of biological role, neurofilaments usually contain three intermediate filament proteins: NEFL, NEFM, and NEFH which are involved in the maintenance of neuronal caliber. May additionally cooperate with other neuronal intermediate filament proteins to form neuronal filamentous networks. The protein is Neurofilament medium polypeptide (NEFM) of Gallus gallus (Chicken).